Reading from the N-terminus, the 215-residue chain is Dual specificity phosphatase 29 (215 aa).

One can recognise a Tyrosine-protein phosphatase domain in the interval 53-201 (HVNEVWPRLH…LRELDKQLVK (149 aa)). 145-152 (HCAMGRSR) is a binding site for substrate. The Phosphocysteine intermediate role is filled by Cys-146.

Belongs to the protein-tyrosine phosphatase family. Non-receptor class dual specificity subfamily. Homodimer. Interacts with PRKAA2. As to expression, skeletal muscle, liver and adipose tissue.

It localises to the cytoplasm. The protein localises to the nucleus. The catalysed reaction is O-phospho-L-tyrosyl-[protein] + H2O = L-tyrosyl-[protein] + phosphate. The enzyme catalyses O-phospho-L-seryl-[protein] + H2O = L-seryl-[protein] + phosphate. It catalyses the reaction O-phospho-L-threonyl-[protein] + H2O = L-threonyl-[protein] + phosphate. Its function is as follows. Dual specificity phosphatase able to dephosphorylate phosphotyrosine, phosphoserine and phosphothreonine residues within the same substrate, with a preference for phosphotyrosine as a substrate. Involved in the modulation of intracellular signaling cascades. In skeletal muscle regulates systemic glucose homeostasis by activating, AMPK, an energy sensor protein kinase. Affects MAP kinase signaling though modulation of the MAPK1/2 cascade in skeletal muscle promoting muscle cell differentiation, development and atrophy. The protein is Dual specificity phosphatase 29 of Mus musculus (Mouse).